A 256-amino-acid chain; its full sequence is 1-(5-phosphoribosyl)-5-[(5-phosphoribosylamino)methylideneamino] imidazole-4-carboxamide isomerase (256 aa).

The Proton acceptor role is filled by D8. D130 serves as the catalytic Proton donor.

Belongs to the HisA/HisF family.

Its subcellular location is the cytoplasm. The enzyme catalyses 1-(5-phospho-beta-D-ribosyl)-5-[(5-phospho-beta-D-ribosylamino)methylideneamino]imidazole-4-carboxamide = 5-[(5-phospho-1-deoxy-D-ribulos-1-ylimino)methylamino]-1-(5-phospho-beta-D-ribosyl)imidazole-4-carboxamide. It functions in the pathway amino-acid biosynthesis; L-histidine biosynthesis; L-histidine from 5-phospho-alpha-D-ribose 1-diphosphate: step 4/9. The polypeptide is 1-(5-phosphoribosyl)-5-[(5-phosphoribosylamino)methylideneamino] imidazole-4-carboxamide isomerase (Pelodictyon phaeoclathratiforme (strain DSM 5477 / BU-1)).